We begin with the raw amino-acid sequence, 2225 residues long: Nonribisomal peptide synthetase notE' (2225 aa).

Positions T24–S59 are disordered. Over residues S28–P49 the composition is skewed to low complexity. Residues Q83–R482 form an adenylation 1 region. Residues S614–T690 enclose the Carrier 1 domain. The residue at position 651 (S651) is an O-(pantetheine 4'-phosphoryl)serine. Residues E730–L1142 are condensation 1. Residues A1164–R1563 form an adenylation 2 region. Positions P1699–Q1775 constitute a Carrier 2 domain. S1736 is modified (O-(pantetheine 4'-phosphoryl)serine). The segment at F1827 to M2138 is condensation 2.

Belongs to the NRP synthetase family.

The enzyme catalyses L-proline + L-tryptophan + 2 ATP = brevianamide F + 2 AMP + 2 diphosphate + 2 H(+). It functions in the pathway alkaloid biosynthesis. In terms of biological role, nonribisomal peptide synthetase; part of the gene cluster that mediates the biosynthesis of notoamide, a fungal indole alkaloid that belongs to a family of natural products containing a characteristic bicyclo[2.2.2]diazaoctane core. The first step of notoamide biosynthesis involves coupling of L-proline and L-tryptophan by the bimodular NRPS notE', to produce cyclo-L-tryptophan-L-proline called brevianamide F. The reverse prenyltransferase notF' then acts as a deoxybrevianamide E synthase and converts brevianamide F to deoxybrevianamide E via reverse prenylation at C-2 of the indole ring leading to the bicyclo[2.2.2]diazaoctane core. Deoxybrevianamide E is further hydroxylated at C-6 of the indole ring, likely catalyzed by the cytochrome P450 monooxygenase notG', to yield 6-hydroxy-deoxybrevianamide E. 6-hydroxy-deoxybrevianamide E is a specific substrate of the prenyltransferase notC' for normal prenylation at C-7 to produce 6-hydroxy-7-prenyl-deoxybrevianamide, also called notoamide S. As the proposed pivotal branching point in notoamide biosynthesis, notoamide S can be diverted to notoamide E through an oxidative pyran ring closure putatively catalyzed by either notH' cytochrome P450 monooxygenase or the notD' FAD-linked oxidoreductase. This step would be followed by an indole 2,3-epoxidation-initiated pinacol-like rearrangement catalyzed by the notB' FAD-dependent monooxygenase leading to the formation of notoamide C and notoamide D. On the other hand notoamide S is converted to notoamide T by notH' (or notD'), a bifunctional oxidase that also functions as the intramolecular Diels-Alderase responsible for generation of (-)-notoamide T. To generate antipodal (+)-notoaminide T, notH (or notD) in Aspergillus strain MF297-2 is expected to catalyze a Diels-Alder reaction leading to the opposite stereochemistry. The remaining oxidoreductase notD' (or notH') likely catalyzes the oxidative pyran ring formation to yield (-)-stephacidin A. The FAD-dependent monooxygenase notI' is highly similar to notB' and is predicted to catalyze a similar conversion from (-)-stephacidin A to (+)-notoamide B via the 2,3-epoxidation of (-)-stephacidin A followed by a pinacol-type rearrangement. Finally, it remains unclear which enzyme could be responsible for the final hydroxylation steps leading to notoamide A and sclerotiamide. In Aspergillus versicolor, this protein is Nonribisomal peptide synthetase notE'.